A 240-amino-acid polypeptide reads, in one-letter code: Putative cytochrome c-type biogenesis protein DbsD-like (240 aa).

6 helical membrane-spanning segments follow: residues 32–52 (FVFF…ILPI), 74–94 (FFFC…ATLL), 104–124 (GIPV…LNIV), 149–169 (VGIG…LLIW), 176–196 (LFIG…PIII), and 218–238 (APFS…SSIL).

Belongs to the DsbD family.

The protein resides in the plastid. It localises to the chloroplast membrane. In terms of biological role, could be involved in cytochrome c synthesis. This chain is Putative cytochrome c-type biogenesis protein DbsD-like, found in Porphyra purpurea (Red seaweed).